The sequence spans 65 residues: Large ribosomal subunit protein uL29 (65 aa).

Belongs to the universal ribosomal protein uL29 family.

This is Large ribosomal subunit protein uL29 from Desulforapulum autotrophicum (strain ATCC 43914 / DSM 3382 / VKM B-1955 / HRM2) (Desulfobacterium autotrophicum).